The chain runs to 490 residues: Metalloreductase STEAP2 (490 aa).

Residues 38-41, 60-61, 93-100, Asn-118, and Ala-151 each bind NADP(+); these read SGDF, SR, and IHREHYTS. Residues Trp-152 and Asp-160 each contribute to the FAD site. Residues 208 to 228 traverse the membrane as a helical segment; sequence LFTLWRGPVVVAISLATFFFL. Position 229 (Tyr-229) interacts with Fe(3+). Residues 259–279 traverse the membrane as a helical segment; that stretch reads LPIVAITLLSLVYLAGLLAAA. Positions 259-407 constitute a Ferric oxidoreductase domain; the sequence is LPIVAITLLS…LGYVALLIST (149 aa). FAD-binding residues include Gln-281 and Arg-302. A run of 4 helical transmembrane segments spans residues 305–325, 359–379, 393–413, and 432–452; these read LGLL…CLPM, MYIS…VTSI, FIQS…VLIY, and FVLA…LFLP. Residue His-316 coordinates heme b. Tyr-319 serves as a coordination point for Fe(3+). Residues Ser-378 and Gln-395 each coordinate FAD. His-409 lines the heme b pocket. Position 483 is a phosphoserine (Ser-483).

It belongs to the STEAP family. It depends on FAD as a cofactor. Heme b is required as a cofactor. Expressed at high levels in prostate and at significantly lower levels in heart, brain, kidney, pancreas, and ovary.

It is found in the endosome membrane. The protein localises to the cell membrane. The enzyme catalyses 2 Fe(2+) + NADP(+) + H(+) = 2 Fe(3+) + NADPH. It carries out the reaction 2 Cu(+) + NADP(+) + H(+) = 2 Cu(2+) + NADPH. In terms of biological role, integral membrane protein that functions as a NADPH-dependent ferric-chelate reductase, using NADPH from one side of the membrane to reduce a Fe(3+) chelate that is bound on the other side of the membrane. Mediates sequential transmembrane electron transfer from NADPH to FAD and onto heme, and finally to the Fe(3+) chelate. Can also reduce Cu(2+) to Cu(1+). The chain is Metalloreductase STEAP2 (STEAP2) from Homo sapiens (Human).